A 249-amino-acid chain; its full sequence is 1-(5-phosphoribosyl)-5-[(5-phosphoribosylamino)methylideneamino] imidazole-4-carboxamide isomerase (249 aa).

Asp8 serves as the catalytic Proton acceptor. Catalysis depends on Asp130, which acts as the Proton donor.

Belongs to the HisA/HisF family.

The protein localises to the cytoplasm. It catalyses the reaction 1-(5-phospho-beta-D-ribosyl)-5-[(5-phospho-beta-D-ribosylamino)methylideneamino]imidazole-4-carboxamide = 5-[(5-phospho-1-deoxy-D-ribulos-1-ylimino)methylamino]-1-(5-phospho-beta-D-ribosyl)imidazole-4-carboxamide. It participates in amino-acid biosynthesis; L-histidine biosynthesis; L-histidine from 5-phospho-alpha-D-ribose 1-diphosphate: step 4/9. This chain is 1-(5-phosphoribosyl)-5-[(5-phosphoribosylamino)methylideneamino] imidazole-4-carboxamide isomerase, found in Chromohalobacter salexigens (strain ATCC BAA-138 / DSM 3043 / CIP 106854 / NCIMB 13768 / 1H11).